A 255-amino-acid chain; its full sequence is MARDQKDHYYRKAKEEGYRARSAYKLKQINDKFHIIRRGSRVVDLGAAPGGWLQVARELSGGIVVGVDLERIEPLEGIVTIQGDITKEETLEQIAAALGGQADVVISDAAPNLSGIWDVDHARSIDLSRAALRIAKRLLRPGGSFLVKVFQGDMFNDYLEEVKREFSSVHAYTPPASRKESAEIYVIGKKLLSAPVRSGEIYDVTVDSVGRTGDGIAMIQGFAVIVKNASPGERLRIKIGPVKQRFAFASILERL.

The S-adenosyl-L-methionine site is built by G50, W52, D68, D84, and D108. The active-site Proton acceptor is K148. The TRAM domain maps to 195–253 (PVRSGEIYDVTVDSVGRTGDGIAMIQGFAVIVKNASPGERLRIKIGPVKQRFAFASILE).

This sequence belongs to the class I-like SAM-binding methyltransferase superfamily. RNA methyltransferase RlmE family.

It is found in the cytoplasm. It catalyses the reaction uridine(2552) in 23S rRNA + S-adenosyl-L-methionine = 2'-O-methyluridine(2552) in 23S rRNA + S-adenosyl-L-homocysteine + H(+). In terms of biological role, specifically methylates the uridine in position 2552 of 23S rRNA at the 2'-O position of the ribose in the fully assembled 50S ribosomal subunit. The sequence is that of Ribosomal RNA large subunit methyltransferase E from Methanothrix thermoacetophila (strain DSM 6194 / JCM 14653 / NBRC 101360 / PT) (Methanosaeta thermophila).